The primary structure comprises 514 residues: Myocyte-specific enhancer factor 2D (514 aa).

One can recognise an MADS-box domain in the interval 3-57 (RKKIQIQRITDERNRQVTFTKRKFGLMKKAYELSVLCDCEIALIIFNHSNKLFQY). A DNA-binding region (mef2-type) is located at residues 58–86 (ASTDMDKVLLKYTEYNEPHESRTNADIIE). Phosphoserine occurs at positions 97, 98, and 106. Leu-107 carries the phosphothreonine modification. Residue Ser-110 is modified to Phosphoserine. Ser-121 is subject to Phosphoserine; by PKA. The interval 174 to 207 (TDPRLLSPQQPALQRNSVSPGLPQRPASAGAMLG) is disordered. Ser-180 is subject to Phosphoserine; by MAPK7. Positions 180-192 (SPQQPALQRNSVS) are enriched in polar residues. Phosphoserine; by PKA is present on Ser-190. A Phosphoserine modification is found at Ser-231. Residues 244–269 (NKVIPAKSPPPPTHNTQLGAPSRKPD) are disordered. Position 245 is an N6-acetyllysine (Lys-245). At Ser-251 the chain carries Phosphoserine. The segment at 286–292 (TEDHLDL) is beta domain. Disordered regions lie at residues 364–399 (WQQP…QQPH) and 430–514 (SIKS…WTLK). A compositionally biased stretch (pro residues) spans 367 to 396 (PQPPQQPQPPQPPQSQPQPPQPQPQQPPQQ). N6-acetyllysine; alternate is present on Lys-432. Lys-432 participates in a covalent cross-link: Glycyl lysine isopeptide (Lys-Gly) (interchain with G-Cter in SUMO); alternate. Position 437 is a phosphoserine (Ser-437).

Belongs to the MEF2 family. In terms of assembly, forms a complex with class II HDACs in undifferentiating cells. On myogenic differentiation, HDACs are released into the cytoplasm allowing MEF2s to interact with other proteins for activation. Interacts with HDAC4 (in undifferentiating cells); the interaction translocates MEF2D to nuclear dots. Forms a heterodimer with MEF2A. Interacts with MAPK7; the interaction phosphorylates but does not activate MEF2D. Interacts with MYOG. Interacts with CCAR2 and HDAC3. Post-translationally, phosphorylated on Ser-437 is which is required for Lys-432 sumoylation and inhibits transcriptional activity. Phosphorylation on this residue by CDK5 is dependent on p35 and calpains. Phosphorylated by PKA at Ser-121 and Ser-190 represses transcriptional activity in embryonic and postnatal skeletal muscle, and stabilizes protein levels. No in vitro phosphorylation by PKA on Thr-20. Phosphorylated and activated by CaMK4. Acetylated on Lys-432 by CREBBP. Acetylated by EP300. Deacetylated by SIRT1 and HDAC3. In terms of processing, sumoylated on Lys-432 with SUMO2 but not SUMO1; which inhibits transcriptional activity and myogenic activity. Desumoylated by SENP3. Post-translationally, proteolytically cleaved in cerebellar granule neurons by caspase 7 following neurotoxicity. Preferentially cleaves the CDK5-mediated hyperphosphorylated form which leads to neuron apoptosis and transcriptional inactivation. As to expression, widely expressed though mainly restricted to skeletal and cardiac muscle, brain, neurons and lymphocytes. Differentially expressed depending on if isoforms contain the beta domain or not, with the total expression of the beta domain-lacking isoforms vastly exceeding that of the beta domain-containing isoforms. Isoforms containing the beta domain are expressed primarily in skeletal and cardiac muscle and in brain. Also present in lung and testis. Splicing to include the beta domain is induced in differentiating myocytes. Isoforms lacking the beta domain are expressed less abundantly in skeletal muscle, brain and lymphocytes, and are uniquely found in ovary, liver, spleen and kidney. In embryos, the beta domain-containing and beta domain-lacking isoforms are equally expressed. Also expressed cerebellar granule neurons and other regions of the CNS. Highest levels in the olfactory bulb, cortex, hippocampus, thalamus and cerebellum.

The protein resides in the nucleus. Transcriptional activator which binds specifically to the MEF2 element, 5'-YTA[AT](4)TAR-3', found in numerous muscle-specific, growth factor- and stress-induced genes. Mediates cellular functions not only in skeletal and cardiac muscle development, but also in neuronal differentiation and survival. Plays diverse roles in the control of cell growth, survival and apoptosis via p38 MAPK signaling in muscle-specific and/or growth factor-related transcription. Plays a critical role in the regulation of neuronal apoptosis. The polypeptide is Myocyte-specific enhancer factor 2D (Mef2d) (Mus musculus (Mouse)).